Here is a 537-residue protein sequence, read N- to C-terminus: Di/tripeptide-binding protein 1 (537 aa).

Positions 1 to 29 are cleaved as a signal peptide; the sequence is MRRNAVIRSAIMPSLLGAALVAAVPQAFA.

The protein belongs to the bacterial solute-binding protein 5 family. The complex is composed of two ATP-binding proteins (DppD and DppF), two transmembrane proteins (DppB and DppC) and a solute-binding protein (DppA1). Five orthologous SBPs (DppA1-A5) are present in P.aeruginosa, which increases the substrate specificity of the DppBCDF transporter.

Its function is as follows. Part of the ABC transporter DppABCDF involved in the uptake of various di/tripeptides. Prefers dipeptides with acidic residues at the C-terminal end. Involved in the uptake of phaseolotoxin, a toxic tripeptide inhibiting the enzyme ornithine carbamoyltransferase. This is Di/tripeptide-binding protein 1 from Pseudomonas aeruginosa (strain UCBPP-PA14).